The chain runs to 302 residues: Small ribosomal subunit biogenesis GTPase RsgA (302 aa).

Positions 69–229 (KNLLIRPKVA…VGDTPGFSKV (161 aa)) constitute a CP-type G domain. GTP is bound by residues 118 to 121 (NKID) and 172 to 180 (GPSGVGKSS). Residues C252, C257, H259, and C265 each coordinate Zn(2+).

Belongs to the TRAFAC class YlqF/YawG GTPase family. RsgA subfamily. Monomer. Associates with 30S ribosomal subunit, binds 16S rRNA. The cofactor is Zn(2+).

The protein resides in the cytoplasm. Its function is as follows. One of several proteins that assist in the late maturation steps of the functional core of the 30S ribosomal subunit. Helps release RbfA from mature subunits. May play a role in the assembly of ribosomal proteins into the subunit. Circularly permuted GTPase that catalyzes slow GTP hydrolysis, GTPase activity is stimulated by the 30S ribosomal subunit. The protein is Small ribosomal subunit biogenesis GTPase RsgA of Aquifex aeolicus (strain VF5).